Here is a 302-residue protein sequence, read N- to C-terminus: tRNA pseudouridine synthase B (302 aa).

The active-site Nucleophile is the Asp-45.

Belongs to the pseudouridine synthase TruB family. Type 1 subfamily.

It carries out the reaction uridine(55) in tRNA = pseudouridine(55) in tRNA. In terms of biological role, responsible for synthesis of pseudouridine from uracil-55 in the psi GC loop of transfer RNAs. The chain is tRNA pseudouridine synthase B from Francisella tularensis subsp. novicida (strain U112).